Reading from the N-terminus, the 658-residue chain is Pentatricopeptide repeat-containing protein 7, mitochondrial (658 aa).

The transit peptide at 1-29 directs the protein to the mitochondrion; the sequence is MRNCVSPLLFAWTKHLRLREFKIPFPNRL. PPR repeat units lie at residues 130 to 164 and 220 to 254; these read VKKRFAECFDKNPDLCLIVYSKLEVETLAKITPIW and LYVELCLVYHFHNSHLGMDSSTVSNLKRFCFSESL.

It localises to the mitochondrion. Mitochondrial RNA-binding protein required for the stability of the atp6 mRNA. This Schizosaccharomyces pombe (strain 972 / ATCC 24843) (Fission yeast) protein is Pentatricopeptide repeat-containing protein 7, mitochondrial (ppr7).